We begin with the raw amino-acid sequence, 535 residues long: Expansin-like protein 9 (535 aa).

An N-terminal signal peptide occupies residues 1–25 (MKINKNNYFKIIIFIIYVIINLINA). Asn-24 carries N-linked (GlcNAc...) asparagine glycosylation. At 26-514 (SDNVKLSNCG…DNSSNILLFS (489 aa)) the chain is on the extracellular side. Residues 31-144 (LSNCGQARAE…QEVSCGFLGN (114 aa)) form the Expansin-like EG45 domain. 2 cysteine pairs are disulfide-bonded: Cys-34/Cys-75 and Cys-78/Cys-139. 3 N-linked (GlcNAc...) asparagine glycosylation sites follow: Asn-122, Asn-257, and Asn-292. Positions 459–487 (VDGSSNDDDGTGGTGGGASNKVGKRVDGE) are disordered. The N-linked (GlcNAc...) asparagine glycan is linked to Asn-506. The chain crosses the membrane as a helical span at residues 515 to 535 (FNITLTFLLLSLIINILLLLF).

This sequence belongs to the expansin family. Expansin A subfamily.

It is found in the membrane. Its function is as follows. May serve to lubricate the movement of the cellulose microfibrils during cell growth and wall extension and/or may serve to maintain the fluid state of the slug cell wall. In Dictyostelium discoideum (Social amoeba), this protein is Expansin-like protein 9 (expl9).